Reading from the N-terminus, the 287-residue chain is Spermidine/putrescine transport system permease protein PotB (287 aa).

Over 1 to 10 the chain is Cytoplasmic; it reads MKNTSKFQNV. Residues 11 to 31 traverse the membrane as a helical segment; sequence VIVTIVGWLVLFVFLPNLMII. Residues 32–70 lie on the Periplasmic side of the membrane; sequence GTSFLTRDDASFVKMVFTLDNYARLLDPLYFEVLLHSLN. An ABC transmembrane type-1 domain is found at 65 to 271; the sequence is LLHSLNMALI…IVMGLMLLIY (207 aa). The chain crosses the membrane as a helical span at residues 71-91; that stretch reads MALIATLSCLVLGYPFAWFLA. At 92 to 99 the chain is on the cytoplasmic side; sequence KLPEKIRP. Residues 100–120 form a helical membrane-spanning segment; it reads LLLFLLIVPFWTNSLIRIYGL. The Periplasmic portion of the chain corresponds to 121 to 145; that stretch reads KIFLSTKGYLNEFLLWLGVIDTPIR. The chain crosses the membrane as a helical span at residues 146-166; that stretch reads IMFTPSAVIIGLVYILLPFMV. Over 167–197 the chain is Cytoplasmic; that stretch reads MPLYSSIEKLDKPLLEAARDLGASKMQTFIR. Residues 198–218 traverse the membrane as a helical segment; the sequence is IIIPLTMPGIVAGCLLVMLPA. At 219-251 the chain is on the periplasmic side; the sequence is MGLFYVSDLMGGAKNLLIGNVIKVQFLNIRDWP. A helical membrane pass occupies residues 252–272; that stretch reads FGAATSITLTIVMGLMLLIYW. At 273–287 the chain is on the cytoplasmic side; the sequence is RASRLLNKKVSDISD.

Belongs to the binding-protein-dependent transport system permease family. CysTW subfamily.

Its subcellular location is the cell inner membrane. Required for the activity of the bacterial periplasmic transport system of putrescine and spermidine. This Salmonella typhi protein is Spermidine/putrescine transport system permease protein PotB (potB).